The following is a 66-amino-acid chain: KEGYIVNYYDGCKYACAKLGDNDYCLRECKARYGKGAGGYCYAFGCWCTHLYEQAVVWPLPKKKCN.

Residues 1-66 enclose the LCN-type CS-alpha/beta domain; the sequence is KEGYIVNYYD…VWPLPKKKCN (66 aa). Disulfide bonds link Cys12-Cys65, Cys16-Cys41, Cys25-Cys46, and Cys29-Cys48.

As to expression, expressed by the venom gland.

The protein resides in the secreted. Its activity is regulated as follows. Is susceptible to be neutralized by human antibodies scFvs 10FG2 and HV. Beta toxins bind voltage-independently at site-4 of sodium channels (Nav) and reduces peak current and shifts the voltage of activation toward more negative potentials thereby affecting sodium channel activation and promoting spontaneous and repetitive firing. This toxin is moderately toxic to mice. This chain is Beta-mammal toxin Cv5, found in Centruroides villegasi (Scorpion).